The following is a 60-amino-acid chain: Light-harvesting polypeptide B-885 alpha-2 chain (60 aa).

Over Ser1–Thr16 the chain is Cytoplasmic. Residues Val17–Leu37 traverse the membrane as a helical segment. Residue His33 participates in a bacteriochlorophyll binding. Topologically, residues Gly38 to Ala60 are periplasmic.

Belongs to the antenna complex alpha subunit family. In terms of assembly, the core complex is formed by different alpha and beta chains, binding bacteriochlorophyll molecules, and arranged most probably in tetrameric structures disposed around the reaction center. The non-pigmented gamma chains may constitute additional components.

It is found in the cell inner membrane. In terms of biological role, antenna complexes are light-harvesting systems, which transfer the excitation energy to the reaction centers. This is Light-harvesting polypeptide B-885 alpha-2 chain from Rhodocyclus tenuis (Rhodospirillum tenue).